Here is a 2883-residue protein sequence, read N- to C-terminus: Bifunctional DNA-directed RNA polymerase subunit beta-beta' (2883 aa).

Residues 1–1377 are DNA-directed RNA polymerase subunit beta; that stretch reads MPTTLKSGNR…DVTVYGETEE (1377 aa). The DNA-directed RNA polymerase subunit beta' stretch occupies residues 1382 to 2883; the sequence is PMPIKEDDRP…IRIKEKTEGA (1502 aa). Residues Cys1447, Cys1449, Cys1462, and Cys1465 each coordinate Zn(2+). Asp1846, Asp1848, and Asp1850 together coordinate Mg(2+). Zn(2+) contacts are provided by Cys2176, Cys2250, Cys2257, and Cys2260.

The protein in the N-terminal section; belongs to the RNA polymerase beta chain family. This sequence in the C-terminal section; belongs to the RNA polymerase beta' chain family. In terms of assembly, the RNAP catalytic core consists of 2 alpha, 1 beta/beta' and 1 omega subunit. When a sigma factor is associated with the core the holoenzyme is formed, which can initiate transcription. Mg(2+) serves as cofactor. It depends on Zn(2+) as a cofactor.

It catalyses the reaction RNA(n) + a ribonucleoside 5'-triphosphate = RNA(n+1) + diphosphate. In terms of biological role, DNA-dependent RNA polymerase catalyzes the transcription of DNA into RNA using the four ribonucleoside triphosphates as substrates. The chain is Bifunctional DNA-directed RNA polymerase subunit beta-beta' (rpoBC) from Wolinella succinogenes (strain ATCC 29543 / DSM 1740 / CCUG 13145 / JCM 31913 / LMG 7466 / NCTC 11488 / FDC 602W) (Vibrio succinogenes).